Consider the following 385-residue polypeptide: D-alanine--D-alanine ligase (385 aa).

Positions Lys165–Glu375 constitute an ATP-grasp domain. Residue Ala201–Glu256 coordinates ATP. Mg(2+) is bound by residues Asp329, Glu342, and Asn344.

It belongs to the D-alanine--D-alanine ligase family. Requires Mg(2+) as cofactor. Mn(2+) serves as cofactor.

The protein localises to the cytoplasm. It catalyses the reaction 2 D-alanine + ATP = D-alanyl-D-alanine + ADP + phosphate + H(+). Its pathway is cell wall biogenesis; peptidoglycan biosynthesis. Functionally, cell wall formation. This chain is D-alanine--D-alanine ligase, found in Streptomyces avermitilis (strain ATCC 31267 / DSM 46492 / JCM 5070 / NBRC 14893 / NCIMB 12804 / NRRL 8165 / MA-4680).